The primary structure comprises 125 residues: Small ribosomal subunit protein bS16 (125 aa).

The disordered stretch occupies residues 87-125 (EGKKKQALARQSASKKAVKEKTEESKGSEVDSETSTSAD). A compositionally biased stretch (basic and acidic residues) spans 103–115 (AVKEKTEESKGSE).

The protein belongs to the bacterial ribosomal protein bS16 family.

The polypeptide is Small ribosomal subunit protein bS16 (Prochlorococcus marinus (strain MIT 9211)).